Consider the following 368-residue polypeptide: 3-isopropylmalate dehydrogenase (368 aa).

NAD(+) is bound at residue 77–88 (GPKWGTGAVRPE). Substrate contacts are provided by Arg95, Arg105, Arg134, and Asp226. Positions 226, 251, and 255 each coordinate Mg(2+). 290–301 (GSAPDLPANKVN) is an NAD(+) binding site.

The protein belongs to the isocitrate and isopropylmalate dehydrogenases family. Homodimer. Mg(2+) serves as cofactor. It depends on Mn(2+) as a cofactor.

Its subcellular location is the cytoplasm. It carries out the reaction (2R,3S)-3-isopropylmalate + NAD(+) = 4-methyl-2-oxopentanoate + CO2 + NADH. The protein operates within amino-acid biosynthesis; L-leucine biosynthesis; L-leucine from 3-methyl-2-oxobutanoate: step 3/4. Its function is as follows. Catalyzes the oxidation of 3-carboxy-2-hydroxy-4-methylpentanoate (3-isopropylmalate) to 3-carboxy-4-methyl-2-oxopentanoate. The product decarboxylates to 4-methyl-2 oxopentanoate. In Kodamaea ohmeri (Yeast), this protein is 3-isopropylmalate dehydrogenase (LEU2).